We begin with the raw amino-acid sequence, 65 residues long: Large ribosomal subunit protein bL35 (65 aa).

The protein belongs to the bacterial ribosomal protein bL35 family.

The sequence is that of Large ribosomal subunit protein bL35 from Polynucleobacter asymbioticus (strain DSM 18221 / CIP 109841 / QLW-P1DMWA-1) (Polynucleobacter necessarius subsp. asymbioticus).